A 206-amino-acid polypeptide reads, in one-letter code: Peptidyl-tRNA hydrolase (206 aa).

Tyr-14 serves as a coordination point for tRNA. The Proton acceptor role is filled by His-19. Residues Tyr-64 and Asn-66 each contribute to the tRNA site. The disordered stretch occupies residues 182 to 206 (FNQKNKKKKEKEQPEAATDQLLENK).

This sequence belongs to the PTH family. Monomer.

The protein resides in the cytoplasm. The catalysed reaction is an N-acyl-L-alpha-aminoacyl-tRNA + H2O = an N-acyl-L-amino acid + a tRNA + H(+). Functionally, hydrolyzes ribosome-free peptidyl-tRNAs (with 1 or more amino acids incorporated), which drop off the ribosome during protein synthesis, or as a result of ribosome stalling. In terms of biological role, catalyzes the release of premature peptidyl moieties from peptidyl-tRNA molecules trapped in stalled 50S ribosomal subunits, and thus maintains levels of free tRNAs and 50S ribosomes. This Desulforamulus reducens (strain ATCC BAA-1160 / DSM 100696 / MI-1) (Desulfotomaculum reducens) protein is Peptidyl-tRNA hydrolase.